Here is an 882-residue protein sequence, read N- to C-terminus: Chondroitin sulfate synthase 3 (882 aa).

Topologically, residues 1–7 are cytoplasmic; sequence MAVRSRR. A helical; Signal-anchor for type II membrane protein transmembrane segment spans residues 8 to 28; it reads PWMSVALGLVLGFTAASWLIA. Topologically, residues 29–882 are lumenal; sequence PRVAELSERK…LGVRYNRTLS (854 aa). Positions 46–167 are disordered; that stretch reads SYYGRSAAGP…GDGGAAAPSA (122 aa). 2 stretches are compositionally biased toward low complexity: residues 59–69 and 120–131; these read AQQPLPQPQSR and GATGLPGAPAAE. Asn155, Asn279, and Asn710 each carry an N-linked (GlcNAc...) asparagine glycan. 2 residues coordinate a divalent metal cation: Asp720 and His834. Asn878 is a glycosylation site (N-linked (GlcNAc...) asparagine).

Belongs to the chondroitin N-acetylgalactosaminyltransferase family. The cofactor is Co(2+). Mn(2+) serves as cofactor. It depends on Cd(2+) as a cofactor. As to expression, detected at low levels in brain, cerebral cortex, uterus and small intestine.

It localises to the golgi apparatus. It is found in the golgi stack membrane. The enzyme catalyses 3-O-(beta-D-GlcA-(1-&gt;3)-beta-D-GalNAc-(1-&gt;4)-beta-D-GlcA-(1-&gt;3)-beta-D-Gal-(1-&gt;3)-beta-D-Gal-(1-&gt;4)-beta-D-Xyl)-L-seryl-[protein] + UDP-N-acetyl-alpha-D-galactosamine = 3-O-(beta-D-GalNAc-(1-&gt;4)-beta-D-GlcA-(1-&gt;3)-beta-D-GalNAc-(1-&gt;4)-beta-D-GlcA-(1-&gt;3)-beta-D-Gal-(1-&gt;3)-beta-D-Gal-(1-&gt;4)-beta-D-Xyl)-L-seryl-[protein] + UDP + H(+). It catalyses the reaction 3-O-{beta-D-GlcA-(1-&gt;3)-[beta-D-GalNAc-(1-&gt;4)-beta-D-GlcA-(1-&gt;3)](n)-beta-D-GalNAc-(1-&gt;4)-beta-D-GlcA-(1-&gt;3)-beta-D-Gal-(1-&gt;3)-beta-D-Gal-(1-&gt;4)-beta-D-Xyl}-L-seryl-[protein] + UDP-N-acetyl-alpha-D-galactosamine = 3-O-{[beta-D-GalNAc-(1-&gt;4)-beta-D-GlcA-(1-&gt;3)](n+1)-beta-D-GalNAc-(1-&gt;4)-beta-D-GlcA-(1-&gt;3)-beta-D-Gal-(1-&gt;3)-beta-D-Gal-(1-&gt;4)-beta-D-Xyl}-L-seryl-[protein] + UDP + H(+). It carries out the reaction 3-O-(beta-D-GalNAc-(1-&gt;4)-beta-D-GlcA-(1-&gt;3)-beta-D-Gal-(1-&gt;3)-beta-D-Gal-(1-&gt;4)-beta-D-Xyl)-L-seryl-[protein] + UDP-alpha-D-glucuronate = 3-O-(beta-D-GlcA-(1-&gt;3)-beta-D-GalNAc-(1-&gt;4)-beta-D-GlcA-(1-&gt;3)-beta-D-Gal-(1-&gt;3)-beta-D-Gal-(1-&gt;4)-beta-D-Xyl)-L-seryl-[protein] + UDP + H(+). The catalysed reaction is 3-O-{[beta-D-GalNAc-(1-&gt;4)-beta-D-GlcA-(1-&gt;3)](n)-beta-D-GalNAc-(1-&gt;4)-beta-D-GlcA-(1-&gt;3)-beta-D-Gal-(1-&gt;3)-beta-D-Gal-(1-&gt;4)-beta-D-Xyl}-L-seryl-[protein] + UDP-alpha-D-glucuronate = 3-O-{beta-D-GlcA-(1-&gt;3)-[beta-D-GalNAc-(1-&gt;4)-beta-D-GlcA-(1-&gt;3)](n)-beta-D-GalNAc-(1-&gt;4)-beta-D-GlcA-(1-&gt;3)-beta-D-Gal-(1-&gt;3)-beta-D-Gal-(1-&gt;4)-beta-D-Xyl}-L-seryl-[protein] + UDP + H(+). In terms of biological role, has both beta-1,3-glucuronic acid and beta-1,4-N-acetylgalactosamine transferase activity. Transfers glucuronic acid (GlcUA) from UDP-GlcUA and N-acetylgalactosamine (GalNAc) from UDP-GalNAc to the non-reducing end of the elongating chondroitin polymer. Specific activity is much reduced compared to CHSY1. This chain is Chondroitin sulfate synthase 3 (CHSY3), found in Homo sapiens (Human).